A 51-amino-acid chain; its full sequence is Glutamine synthetase (51 aa).

It belongs to the glutamine synthetase family. In terms of assembly, homooctamer.

The protein resides in the cytoplasm. It catalyses the reaction L-glutamate + NH4(+) + ATP = L-glutamine + ADP + phosphate + H(+). This Vitis sp. (Grape) protein is Glutamine synthetase.